A 61-amino-acid chain; its full sequence is MAKTSMIVKQSRTPKFRVRAHNRCKICGRPHAYMRKFGMCRICFRNLAYKGEIPGVTKASW.

Zn(2+) contacts are provided by Cys-24, Cys-27, Cys-40, and Cys-43.

This sequence belongs to the universal ribosomal protein uS14 family. Zinc-binding uS14 subfamily. Part of the 30S ribosomal subunit. Contacts proteins S3 and S10. Zn(2+) is required as a cofactor.

Functionally, binds 16S rRNA, required for the assembly of 30S particles and may also be responsible for determining the conformation of the 16S rRNA at the A site. The sequence is that of Small ribosomal subunit protein uS14 from Heliobacterium modesticaldum (strain ATCC 51547 / Ice1).